A 513-amino-acid chain; its full sequence is Flavonoid 3'-monooxygenase (513 aa).

The helical transmembrane segment at 1 to 21 (MATLFLTILLATVLFLILRIF) threads the bilayer. Topologically, residues 22 to 513 (SHRRNRSHNN…APNVYGLGSG (492 aa)) are cytoplasmic. Cysteine 445 contributes to the heme binding site.

The protein belongs to the cytochrome P450 family. It depends on heme as a cofactor. In terms of tissue distribution, high expression in siliques and to a lower extent in stems, flowers and senescing leaves.

It is found in the endoplasmic reticulum membrane. It carries out the reaction a 3'-unsubstituted flavone + reduced [NADPH--hemoprotein reductase] + O2 = a 3'-hydroxyflavone + oxidized [NADPH--hemoprotein reductase] + H2O + H(+). The protein operates within secondary metabolite biosynthesis; flavonoid biosynthesis. Functionally, catalyzes the 3'-hydroxylation of the flavonoid B-ring to the 3',4'-hydroxylated state. Convert naringenin to eriodictyol and dihydrokaempferol to dihydroquercetin. The polypeptide is Flavonoid 3'-monooxygenase (CYP75B1) (Arabidopsis thaliana (Mouse-ear cress)).